The following is a 486-amino-acid chain: Pup--protein ligase (486 aa).

Residue E33 participates in Mg(2+) binding. An ATP-binding site is contributed by R76. Y78 lines the Mg(2+) pocket. D80 serves as the catalytic Proton acceptor. Residue E86 participates in Mg(2+) binding. ATP-binding residues include T89 and W451.

The protein belongs to the Pup ligase/Pup deamidase family. Pup-conjugating enzyme subfamily.

The catalysed reaction is ATP + [prokaryotic ubiquitin-like protein]-L-glutamate + [protein]-L-lysine = ADP + phosphate + N(6)-([prokaryotic ubiquitin-like protein]-gamma-L-glutamyl)-[protein]-L-lysine.. Its pathway is protein degradation; proteasomal Pup-dependent pathway. The protein operates within protein modification; protein pupylation. Functionally, catalyzes the covalent attachment of the prokaryotic ubiquitin-like protein modifier Pup to the proteasomal substrate proteins, thereby targeting them for proteasomal degradation. This tagging system is termed pupylation. The ligation reaction involves the side-chain carboxylate of the C-terminal glutamate of Pup and the side-chain amino group of a substrate lysine. The polypeptide is Pup--protein ligase (Bifidobacterium longum (strain NCC 2705)).